The sequence spans 106 residues: Replication restart protein PriB (106 aa).

Positions 4 to 103 (TNRLVLSGTV…LHAEQIEFID (100 aa)) constitute an SSB domain.

The protein belongs to the PriB family. As to quaternary structure, homodimer. Interacts with PriA and DnaT. Component of the replication restart primosome. Primosome assembly occurs via a 'hand-off' mechanism. PriA binds to replication forks, subsequently PriB then DnaT bind; DnaT then displaces ssDNA to generate the helicase loading substrate.

In terms of biological role, involved in the restart of stalled replication forks, which reloads the replicative helicase on sites other than the origin of replication; the PriA-PriB pathway is the major replication restart pathway. During primosome assembly it facilitates complex formation between PriA and DnaT on DNA; stabilizes PriA on DNA. Stimulates the DNA unwinding activity of PriA helicase. The polypeptide is Replication restart protein PriB (Yersinia enterocolitica serotype O:8 / biotype 1B (strain NCTC 13174 / 8081)).